We begin with the raw amino-acid sequence, 210 residues long: Pyridoxine/pyridoxamine 5'-phosphate oxidase (210 aa).

Residues 7 to 10 and Lys65 each bind substrate; that span reads RQSY. Residues 60–65, 75–76, Arg81, Lys82, and Gln104 each bind FMN; these read RIVLIK and YT. Positions 122, 126, and 130 each coordinate substrate. FMN contacts are provided by residues 139-140 and Trp182; that span reads QS. 188–190 contacts substrate; it reads RLH. Arg192 provides a ligand contact to FMN.

It belongs to the pyridoxamine 5'-phosphate oxidase family. Homodimer. Requires FMN as cofactor.

The catalysed reaction is pyridoxamine 5'-phosphate + O2 + H2O = pyridoxal 5'-phosphate + H2O2 + NH4(+). It carries out the reaction pyridoxine 5'-phosphate + O2 = pyridoxal 5'-phosphate + H2O2. Its pathway is cofactor metabolism; pyridoxal 5'-phosphate salvage; pyridoxal 5'-phosphate from pyridoxamine 5'-phosphate: step 1/1. It participates in cofactor metabolism; pyridoxal 5'-phosphate salvage; pyridoxal 5'-phosphate from pyridoxine 5'-phosphate: step 1/1. In terms of biological role, catalyzes the oxidation of either pyridoxine 5'-phosphate (PNP) or pyridoxamine 5'-phosphate (PMP) into pyridoxal 5'-phosphate (PLP). The sequence is that of Pyridoxine/pyridoxamine 5'-phosphate oxidase from Bordetella petrii (strain ATCC BAA-461 / DSM 12804 / CCUG 43448).